Reading from the N-terminus, the 243-residue chain is Cell division protein ZipA (243 aa).

Residues 1 to 4 are Periplasmic-facing; it reads MSDV. Residues 5-25 form a helical membrane-spanning segment; the sequence is TLLRIGIAIVGILFVAAVFFF. At 26-243 the chain is on the cytoplasmic side; it reads STPKTSAHRV…VPPLIKNSRW (218 aa). A disordered region spans residues 32–89; that stretch reads AHRVRTKKEEPPRERREPMLSTEVDNSPHQSVDEVPASVPQQQVNPEATKPGEIELGK. A compositionally biased stretch (basic and acidic residues) spans 38 to 49; it reads KKEEPPRERREP.

It belongs to the ZipA family. Interacts with FtsZ via their C-terminal domains.

It localises to the cell inner membrane. Essential cell division protein that stabilizes the FtsZ protofilaments by cross-linking them and that serves as a cytoplasmic membrane anchor for the Z ring. Also required for the recruitment to the septal ring of downstream cell division proteins. The protein is Cell division protein ZipA of Xylella fastidiosa (strain Temecula1 / ATCC 700964).